The chain runs to 886 residues: Cadherin-1 (886 aa).

Positions 1–23 are cleaved as a signal peptide; sequence MGARCRSFSALLLLLQVSSWLCQ. The propeptide occupies 24 to 158; it reads QPESESDSCR…FHQGLRRQKR (135 aa). Topologically, residues 24–713 are extracellular; sequence QPESESDSCR…SLEAGLQVPA (690 aa). Cadherin domains lie at 159 to 266, 267 to 379, 380 to 490, 491 to 597, and 598 to 701; these read DWVI…RPEF, IQEV…APIF, NPST…APIF, VPAE…DNAP, and IPEP…NCMK. Position 261 (Asp261) interacts with Ca(2+). Residues Ser284 and Ser289 are each glycosylated (O-linked (Man...) serine). Ca(2+) is bound at residue Asp292. Thr362, Thr474, Thr476, and Thr513 each carry an O-linked (Man...) threonine glycan. Asn562 is a glycosylation site (N-linked (GlcNAc...) asparagine). Thr580, Thr582, and Thr584 each carry an O-linked (Man...) threonine glycan. Asn641 carries an N-linked (GlcNAc...) asparagine glycan. Residues 714–734 traverse the membrane as a helical segment; sequence ILGILGGILALLILILLLLLF. Residues 735–886 lie on the Cytoplasmic side of the membrane; sequence LRRRTVVKEP…ADMYGGGEED (152 aa). The segment at 751–771 is disordered; sequence DTRDNVYYYDEEGGGEEDQDF. Phosphotyrosine; by SRC occurs at positions 757, 758, and 759. Positions 759–771 are enriched in acidic residues; that stretch reads YDEEGGGEEDQDF. The required for binding CTNND1 and PSEN1 stretch occupies residues 762-773; that stretch reads EGGGEEDQDFDL. Phosphoserine occurs at positions 774, 797, 842, 844, and 850. The segment at 815 to 886 is required for binding alpha, beta and; that stretch reads IDENLKAADS…ADMYGGGEED (72 aa).

As to quaternary structure, homodimer; disulfide-linked. Component of an E-cadherin/ catenin adhesion complex composed of at least E-cadherin/CDH1, beta-catenin/CTNNB1 or gamma-catenin/JUP, and potentially alpha-catenin/CTNNA1; the complex is located to adherens junctions. Found in a complex composed of CDH1, RAP1A and PKP3; PKP3 acts as a scaffold protein within the complex, the complex is required for CDH1 localization to mature desmosome cell junctions. Interacts with the TRPV4 and CTNNB1 complex. Interacts with CTNND1. The stable association of CTNNA1 is controversial as CTNNA1 was shown not to bind to F-actin when assembled in the complex. Alternatively, the CTNNA1-containing complex may be linked to F-actin by other proteins such as LIMA1. Interaction with PSEN1, cleaves CDH1 resulting in the disassociation of cadherin-based adherens junctions (CAJs). Interacts with AJAP1 and DLGAP5. Interacts with TBC1D2. Interacts with LIMA1. Interacts with CAV1. Interacts with PIP5K1C. Interacts with DDR1; this stabilizes CDH1 at the cell surface and inhibits its internalization. Interacts with RAPGEF2. Interacts with RAB8B. Interacts with KLRG1. Forms a ternary complex composed of ADAM10, CADH1 and EPHA4; within the complex, CADH1 is cleaved by ADAM10 which disrupts adherens junctions. Interacts with SPEF1. Interacts with CTNNB1 and PKP2. Interacts with AMOTL2; the interaction may facilitate binding of radial actin fibers to cell junction complexes. Interacts with DSG3; the interaction is required for CDH1 localization to developing adherens junctions. Post-translationally, during apoptosis or with calcium influx, cleaved by a membrane-bound metalloproteinase (ADAM10), PS1/gamma-secretase and caspase-3. Processing by the metalloproteinase, induced by calcium influx, causes disruption of cell-cell adhesion and the subsequent release of beta-catenin into the cytoplasm. The residual membrane-tethered cleavage product is rapidly degraded via an intracellular proteolytic pathway. Cleavage by caspase-3 releases the cytoplasmic tail resulting in disintegration of the actin microfilament system. The gamma-secretase-mediated cleavage promotes disassembly of adherens junctions. During development of the cochlear organ of Corti, cleavage by ADAM10 at adherens junctions promotes pillar cell separation. N-glycosylation at Asn-641 is essential for expression, folding and trafficking. Addition of bisecting N-acetylglucosamine by MGAT3 modulates its cell membrane location. In terms of processing, ubiquitinated by a SCF complex containing SKP2, which requires prior phosphorylation by CK1/CSNK1A1. Ubiquitinated by CBLL1/HAKAI, requires prior phosphorylation at Tyr-758. Post-translationally, O-glycosylated. O-manosylated by TMTC1, TMTC2, TMTC3 or TMTC4. Ser-289 and Thr-513 are O-manosylated by TMTC2 or TMTC4 but not TMTC1 or TMTC3.

It localises to the cell junction. The protein resides in the adherens junction. The protein localises to the cell membrane. It is found in the endosome. Its subcellular location is the golgi apparatus. It localises to the trans-Golgi network. The protein resides in the cytoplasm. The protein localises to the desmosome. Functionally, cadherins are calcium-dependent cell adhesion proteins. They preferentially interact with themselves in a homophilic manner in connecting cells; cadherins may thus contribute to the sorting of heterogeneous cell types. CDH1 is involved in mechanisms regulating cell-cell adhesions, mobility and proliferation of epithelial cells. Promotes organization of radial actin fiber structure and cellular response to contractile forces, via its interaction with AMOTL2 which facilitates anchoring of radial actin fibers to CDH1 junction complexes at the cell membrane. Plays a role in the early stages of desmosome cell-cell junction formation via facilitating the recruitment of DSG2 and DSP to desmosome plaques. Has a potent invasive suppressor role. It is a ligand for integrin alpha-E/beta-7. E-Cad/CTF2 promotes non-amyloidogenic degradation of Abeta precursors. Has a strong inhibitory effect on APP C99 and C83 production. In Rattus norvegicus (Rat), this protein is Cadherin-1 (Cdh1).